Reading from the N-terminus, the 1106-residue chain is GYF domain-containing protein gyf-1 (1106 aa).

Over residues Met1 to Pro17 the composition is skewed to polar residues. Disordered stretches follow at residues Met1–Asp50, Gly160–Val370, and Lys383–Ser434. The segment covering Arg30–Ser42 has biased composition (low complexity). Residues Leu162–Lys180 show a composition bias toward polar residues. Residues Gly207–Asn224 are compositionally biased toward gly residues. Residues Ala229–Phe243 show a composition bias toward polar residues. Gly residues predominate over residues Arg248–Thr261. Residues Val306–Glu322 show a composition bias toward polar residues. 2 stretches are compositionally biased toward low complexity: residues Gln334–Gln353 and Pro390–Arg410. In terms of domain architecture, GYF spans Pro459 to Gly508. Residues Leu584 to Arg746 are a coiled coil. Disordered stretches follow at residues Ala778–Pro811, Lys909–Val928, Ala1026–Ile1076, and Arg1087–Arg1106. Positions Val786–Ser801 are enriched in polar residues. Positions Ser1046 to Gly1057 are enriched in low complexity.

The polypeptide is GYF domain-containing protein gyf-1 (Caenorhabditis elegans).